A 181-amino-acid chain; its full sequence is Ribonuclease HII (181 aa).

The RNase H type-2 domain maps to 1–181 (MICGIDEVGR…SLHRKNFKLI (181 aa)). Residues Asp-6, Glu-7, and Asp-98 each contribute to the a divalent metal cation site.

This sequence belongs to the RNase HII family. Mn(2+) is required as a cofactor. Mg(2+) serves as cofactor.

It is found in the cytoplasm. The catalysed reaction is Endonucleolytic cleavage to 5'-phosphomonoester.. Its function is as follows. Endonuclease that specifically degrades the RNA of RNA-DNA hybrids. The chain is Ribonuclease HII from Borreliella afzelii (strain PKo) (Borrelia afzelii).